The chain runs to 87 residues: Toxin RelG (87 aa).

It belongs to the RelE toxin family. As to quaternary structure, interacts with cognate antitoxin RelF, which neutralizes the toxin. Also interacts with non-cognate antitoxin RelB in vitro, in M.smegmatis this neutralizes the toxicity of this toxin.

Toxic component of a type II toxin-antitoxin (TA) system. Has RNase activity and preferentially cleaves at the 3'-end of purine ribonucleotides. Overexpression in M.tuberculosis or M.smegmatis inhibits colony formation in a bacteriostatic rather than bacteriocidal fashion. Its toxic effect is neutralized by coexpression with cognate antitoxin RelB2 (shown only for M.smegmatis). Overexpression also increases the number of gentamicin-tolerant and levofloxacin-tolerant persister cells. Its function is as follows. In combination with cognate antitoxin RelF represses its own promoter. Has been seen to bind DNA in complex with antitoxin RelF but not alone. The polypeptide is Toxin RelG (relG) (Mycobacterium tuberculosis (strain ATCC 25618 / H37Rv)).